A 288-amino-acid polypeptide reads, in one-letter code: ATP synthase gamma chain (288 aa).

The protein belongs to the ATPase gamma chain family. F-type ATPases have 2 components, CF(1) - the catalytic core - and CF(0) - the membrane proton channel. CF(1) has five subunits: alpha(3), beta(3), gamma(1), delta(1), epsilon(1). CF(0) has three main subunits: a, b and c.

It localises to the cell inner membrane. Produces ATP from ADP in the presence of a proton gradient across the membrane. The gamma chain is believed to be important in regulating ATPase activity and the flow of protons through the CF(0) complex. This Polaromonas sp. (strain JS666 / ATCC BAA-500) protein is ATP synthase gamma chain.